The sequence spans 122 residues: Large ribosomal subunit protein uL14 (122 aa).

Belongs to the universal ribosomal protein uL14 family. As to quaternary structure, part of the 50S ribosomal subunit. Forms a cluster with proteins L3 and L19. In the 70S ribosome, L14 and L19 interact and together make contacts with the 16S rRNA in bridges B5 and B8.

Functionally, binds to 23S rRNA. Forms part of two intersubunit bridges in the 70S ribosome. The chain is Large ribosomal subunit protein uL14 from Sulfurihydrogenibium sp. (strain YO3AOP1).